The primary structure comprises 269 residues: tRNA-cytidine(32) 2-sulfurtransferase (269 aa).

The PP-loop motif motif lies at 53–58 (SGGKDS). Cys128, Cys131, and Cys218 together coordinate [4Fe-4S] cluster.

Belongs to the TtcA family. Homodimer. Mg(2+) serves as cofactor. Requires [4Fe-4S] cluster as cofactor.

It is found in the cytoplasm. It carries out the reaction cytidine(32) in tRNA + S-sulfanyl-L-cysteinyl-[cysteine desulfurase] + AH2 + ATP = 2-thiocytidine(32) in tRNA + L-cysteinyl-[cysteine desulfurase] + A + AMP + diphosphate + H(+). Its pathway is tRNA modification. Catalyzes the ATP-dependent 2-thiolation of cytidine in position 32 of tRNA, to form 2-thiocytidine (s(2)C32). The sulfur atoms are provided by the cysteine/cysteine desulfurase (IscS) system. The polypeptide is tRNA-cytidine(32) 2-sulfurtransferase (Pelobacter propionicus (strain DSM 2379 / NBRC 103807 / OttBd1)).